The following is a 343-amino-acid chain: MLSTEDFDFDLPEELIAQTPLKDRASSRLLVVNKETGDMEDKHFHDILDELQPGDALVMNNTRVLPARLYGEKPETGGHLEVLLLTNTEGDTWETLIKPAKRAKVGTEIQFGDGRLKAVVKEELEHGGRIIEFKYDGIFLEILESLGEMPLPPYIKERLDDPDRYQTVYAEENGSAAAPTAGLHFTKELLEEIKAKGVHLVYLTLHVGLGTFRPVSVDNIEEHHMHSEFYRLTEEAAKQLNEVRQAGGRIVAVGTTSIRTLETIGTKFNGEIQADSGWTDIFITPGYQFKVVEAFSTNFHLPKSTLVMLVSAFAGKDLTLAAYQHAIEEKYRFFSFGDAMFIK.

This sequence belongs to the QueA family. As to quaternary structure, monomer.

The protein resides in the cytoplasm. The enzyme catalyses 7-aminomethyl-7-carbaguanosine(34) in tRNA + S-adenosyl-L-methionine = epoxyqueuosine(34) in tRNA + adenine + L-methionine + 2 H(+). Its pathway is tRNA modification; tRNA-queuosine biosynthesis. In terms of biological role, transfers and isomerizes the ribose moiety from AdoMet to the 7-aminomethyl group of 7-deazaguanine (preQ1-tRNA) to give epoxyqueuosine (oQ-tRNA). In Enterococcus faecalis (strain ATCC 700802 / V583), this protein is S-adenosylmethionine:tRNA ribosyltransferase-isomerase.